The following is a 656-amino-acid chain: Pyoverdine export ATP-binding/permease protein PvdT (656 aa).

The ABC transporter domain maps to 6–245 (IDLRAIRKSY…SANPAALQAV (240 aa)). An ATP-binding site is contributed by 43-50 (GASGSGKS). A run of 4 helical transmembrane segments spans residues 284-304 (ALTL…LAVG), 538-558 (IAAI…LMTV), 589-609 (LSVV…AALL), and 619-639 (VPAV…FGFM).

This sequence belongs to the ABC transporter superfamily. Macrolide exporter (TC 3.A.1.122) family. As to quaternary structure, part of the tripartite efflux system PvdRT-OpmQ, which is composed of an inner membrane component with both ATPase and permease domains, PvdT, a periplasmic membrane fusion protein, PvdR, and an outer membrane component, OpmQ.

It is found in the cell inner membrane. Its function is as follows. Part of the tripartite efflux system PvdRT-OpmQ required for the secretion into the extracellular milieu of the siderophore pyoverdine (PVD), which is involved in iron acquisition. This subunit binds PVD and drives its secretion by hydrolyzing ATP. The system is responsible for export of newly synthesized PVD after the final steps of biosynthesis have taken place in the periplasm. It is also responsible for recycling of PVD after internalization of ferri-PVD into the periplasm by the outer-membrane receptor FpvA and release of iron from PVD, thus making PVD available for new cycles of iron uptake. This chain is Pyoverdine export ATP-binding/permease protein PvdT, found in Pseudomonas savastanoi pv. phaseolicola (strain 1448A / Race 6) (Pseudomonas syringae pv. phaseolicola (strain 1448A / Race 6)).